The sequence spans 721 residues: Cytosolic carboxypeptidase 2 (721 aa).

Positions 43-71 (TASDMINSSSPSESSDSNLEEEQEESKPC) are disordered. A compositionally biased stretch (low complexity) spans 50-59 (SSSPSESSDS). One can recognise a Peptidase M14 domain in the interval 334–605 (YPYTYSKLQH…CFCDTLLDFC (272 aa)). His-400, Glu-403, and His-496 together coordinate Zn(2+). Glu-569 (proton donor/acceptor) is an active-site residue. The segment at 645 to 721 (DIESSTSGSN…TQHGDTEDQS (77 aa)) is disordered. Residues 647-660 (ESSTSGSNSTESDG) are compositionally biased toward low complexity. The segment covering 672–688 (GKKKLLRSRKERNRLRQ) has biased composition (basic residues). Positions 703 to 714 (YSCQTLNATTQH) are enriched in polar residues.

This sequence belongs to the peptidase M14 family. It depends on Zn(2+) as a cofactor.

It localises to the cytoplasm. The protein localises to the cytosol. Its subcellular location is the cytoskeleton. The protein resides in the microtubule organizing center. It is found in the centrosome. It localises to the centriole. The protein localises to the cilium basal body. It carries out the reaction (L-glutamyl)(n+1)-gamma-L-glutamyl-L-glutamyl-[protein] + H2O = (L-glutamyl)(n)-gamma-L-glutamyl-L-glutamyl-[protein] + L-glutamate. In terms of biological role, metallocarboxypeptidase that mediates deglutamylation of target proteins. Catalyzes the deglutamylation of polyglutamate side chains generated by post-translational polyglutamylation in proteins such as tubulins. Also removes gene-encoded polyglutamates from the carboxy-terminus of target proteins such as MYLK. Does not show detyrosinase or deglycylase activities from the carboxy-terminus of tubulin. Its function is as follows. Metallocarboxypeptidase that mediates deglutamylation of tubulin and non-tubulin target proteins. Catalyzes the removal of polyglutamate side chains present on the gamma-carboxyl group of glutamate residues within the C-terminal tail of tubulin protein. Specifically cleaves tubulin long-side-chains, while it is not able to remove the branching point glutamate. Also catalyzes the removal of polyglutamate residues from the carboxy-terminus of non-tubulin proteins. This chain is Cytosolic carboxypeptidase 2 (zte25), found in Danio rerio (Zebrafish).